The sequence spans 829 residues: Cadherin-3 (829 aa).

An N-terminal signal peptide occupies residues 1–24; it reads MGLPRGPLASLLLLQVCWLQCAAS. A propeptide spanning residues 25-107 is cleaved from the precursor; it reads EPCRAVFREA…SKRILRRHKR (83 aa). Cadherin domains lie at 108–215, 216–328, 329–440, 441–546, and 547–650; these read DWVV…KPKF, TQDT…APMF, DPQK…APVF, VPPS…DHGP, and VPEP…CPGP. Over 108-654 the chain is Extracellular; the sequence is DWVVAPISVP…ETCPGPWKGG (547 aa). N-linked (GlcNAc...) asparagine glycosylation occurs at Asn200. Asn566 is a glycosylation site (N-linked (GlcNAc...) asparagine). Residues 655–677 traverse the membrane as a helical segment; sequence FILPVLGAVLALLFLLLVLLLLV. The Cytoplasmic portion of the chain corresponds to 678 to 829; sequence RKKRKIKEPL…ADMYGGGEDD (152 aa).

As to quaternary structure, interacts with CDCP1 and CTNNB1. In terms of tissue distribution, expressed in some normal epithelial tissues and in some carcinoma cell lines.

It localises to the cell membrane. Its function is as follows. Cadherins are calcium-dependent cell adhesion proteins. They preferentially interact with themselves in a homophilic manner in connecting cells; cadherins may thus contribute to the sorting of heterogeneous cell types. The chain is Cadherin-3 (CDH3) from Homo sapiens (Human).